We begin with the raw amino-acid sequence, 118 residues long: Holo-[acyl-carrier-protein] synthase (118 aa).

Residues Asp8 and Glu58 each coordinate Mg(2+).

This sequence belongs to the P-Pant transferase superfamily. AcpS family. The cofactor is Mg(2+).

The protein resides in the cytoplasm. It carries out the reaction apo-[ACP] + CoA = holo-[ACP] + adenosine 3',5'-bisphosphate + H(+). In terms of biological role, transfers the 4'-phosphopantetheine moiety from coenzyme A to a Ser of acyl-carrier-protein. This Streptococcus equi subsp. zooepidemicus (strain H70) protein is Holo-[acyl-carrier-protein] synthase.